A 281-amino-acid polypeptide reads, in one-letter code: Ribosomal RNA small subunit methyltransferase A (281 aa).

The S-adenosyl-L-methionine site is built by N24, L26, G51, E72, D96, and N123.

The protein belongs to the class I-like SAM-binding methyltransferase superfamily. rRNA adenine N(6)-methyltransferase family. RsmA subfamily.

The protein resides in the cytoplasm. The catalysed reaction is adenosine(1518)/adenosine(1519) in 16S rRNA + 4 S-adenosyl-L-methionine = N(6)-dimethyladenosine(1518)/N(6)-dimethyladenosine(1519) in 16S rRNA + 4 S-adenosyl-L-homocysteine + 4 H(+). Functionally, specifically dimethylates two adjacent adenosines (A1518 and A1519) in the loop of a conserved hairpin near the 3'-end of 16S rRNA in the 30S particle. May play a critical role in biogenesis of 30S subunits. This Ureaplasma urealyticum serovar 10 (strain ATCC 33699 / Western) protein is Ribosomal RNA small subunit methyltransferase A.